The chain runs to 161 residues: Cytochrome c-type biogenesis protein CcmE (161 aa).

Residues 1–8 are Cytoplasmic-facing; the sequence is MNARRKKR. A helical; Signal-anchor for type II membrane protein transmembrane segment spans residues 9-29; the sequence is LALATALIGGVAAIASLLLYA. Residues 30 to 161 are Periplasmic-facing; it reads LNSNLNLFYT…EYDSTQKTGY (132 aa). 2 residues coordinate heme: H131 and Y135.

This sequence belongs to the CcmE/CycJ family.

Its subcellular location is the cell inner membrane. Functionally, heme chaperone required for the biogenesis of c-type cytochromes. Transiently binds heme delivered by CcmC and transfers the heme to apo-cytochromes in a process facilitated by CcmF and CcmH. This is Cytochrome c-type biogenesis protein CcmE from Shewanella loihica (strain ATCC BAA-1088 / PV-4).